The following is a 383-amino-acid chain: MNIYIDENIPYARDFFTGHGNLHFFSGRNASAEQLIDADVLLVRSITEVNEKLLSLNKKLKFVGTATIGTDHIDQTYLKNRGIVFSSAPGCNKVSVAEYILSSLLVLADQQQFILSDKSIAIVGAGNTGTAVYQRLNALGMNCKLYDPPLLLAGDKRQFCTFEEVLEADIISLHVPKVVQGPFPTVHMFDSKVLSQLTNGQILLNAARGDLIDNQALLELAEQGLTPTLVLDVWENEPHINQQLLPYVAIATPHIAGYSLDGRVRGTEMLYQALCDFLQLKGKYTTADFVHRAAINSVSISKKIDQPLIKSLMHLIFDVRRDDALFREMIEDVDGFDTMRKTYQERRELSTLTVESSVEQNTLLQLLGFSTNVQNEIKETHEI.

S45 and T67 together coordinate substrate. Residue D147 participates in NAD(+) binding. R208 is an active-site residue. Residue D232 coordinates NAD(+). E237 is a catalytic residue. The active-site Proton donor is the H254. Residue G257 coordinates NAD(+). A substrate-binding site is contributed by Y258.

The protein belongs to the D-isomer specific 2-hydroxyacid dehydrogenase family. PdxB subfamily. Homodimer.

Its subcellular location is the cytoplasm. It catalyses the reaction 4-phospho-D-erythronate + NAD(+) = (R)-3-hydroxy-2-oxo-4-phosphooxybutanoate + NADH + H(+). Its pathway is cofactor biosynthesis; pyridoxine 5'-phosphate biosynthesis; pyridoxine 5'-phosphate from D-erythrose 4-phosphate: step 2/5. In terms of biological role, catalyzes the oxidation of erythronate-4-phosphate to 3-hydroxy-2-oxo-4-phosphonooxybutanoate. This chain is Erythronate-4-phosphate dehydrogenase, found in Psychromonas ingrahamii (strain DSM 17664 / CCUG 51855 / 37).